A 75-amino-acid polypeptide reads, in one-letter code: Small ribosomal subunit protein bS18 (75 aa).

Belongs to the bacterial ribosomal protein bS18 family. Part of the 30S ribosomal subunit. Forms a tight heterodimer with protein bS6.

In terms of biological role, binds as a heterodimer with protein bS6 to the central domain of the 16S rRNA, where it helps stabilize the platform of the 30S subunit. In Cellvibrio japonicus (strain Ueda107) (Pseudomonas fluorescens subsp. cellulosa), this protein is Small ribosomal subunit protein bS18.